A 72-amino-acid chain; its full sequence is UPF0270 protein KPK_0377 (72 aa).

It belongs to the UPF0270 family.

This chain is UPF0270 protein KPK_0377, found in Klebsiella pneumoniae (strain 342).